We begin with the raw amino-acid sequence, 277 residues long: Carbonyl reductase [NADPH] 1 (277 aa).

NADP(+)-binding positions include 10–34 (VTGA…GDVL), 63–64 (DI), and N90. S30 is modified (phosphoserine). Residues 95-97 (FKM) and Q106 contribute to the glutathione site. S140 is a substrate binding site. Residue 193–194 (AY) participates in glutathione binding. Catalysis depends on Y194, which acts as the Proton acceptor. NADP(+) is bound by residues 194-198 (YGVTK) and 231-233 (VRT).

Belongs to the short-chain dehydrogenases/reductases (SDR) family. Monomer. In terms of tissue distribution, present in liver and kidney.

The protein resides in the cytoplasm. The enzyme catalyses a secondary alcohol + NADP(+) = a ketone + NADPH + H(+). It catalyses the reaction prostaglandin F2alpha + NADP(+) = prostaglandin E2 + NADPH + H(+). It carries out the reaction prostaglandin E1 + NADP(+) = 15-oxoprostaglandin E1 + NADPH + H(+). The catalysed reaction is menadione + NADPH + H(+) = menadiol + NADP(+). The enzyme catalyses prostaglandin D2 + NADP(+) = 15-oxoprostaglandin D2 + NADPH + H(+). It catalyses the reaction prostaglandin E2 + NADP(+) = 15-oxoprostaglandin E2 + NADPH + H(+). It carries out the reaction prostaglandin F2alpha + NADP(+) = 15-oxoprostaglandin F2alpha + NADPH + H(+). The catalysed reaction is daunorubicin + NADPH + H(+) = 13-dihydrodaunorubicin + NADP(+). The enzyme catalyses S-nitrosoglutathione + NADPH + H(+) = S-(hydroxysulfenamide)glutathione + NADP(+). It catalyses the reaction a primary alcohol + NADP(+) = an aldehyde + NADPH + H(+). It carries out the reaction cortisol + NADPH + H(+) = 20beta-dihydrocortisol + NADP(+). The catalysed reaction is corticosterone + NADPH + H(+) = 20beta-dihydrocorticosterone + NADP(+). Functionally, NADPH-dependent reductase with broad substrate specificity. Catalyzes the reduction of a wide variety of carbonyl compounds including quinones, prostaglandins, menadione, plus various xenobiotics. Catalyzes the reduction of the antitumor anthracyclines doxorubicin and daunorubicin to the cardiotoxic compounds doxorubicinol and daunorubicinol. Can convert prostaglandin E to prostaglandin F2-alpha. Can bind glutathione, which explains its higher affinity for glutathione-conjugated substrates. Catalyzes the reduction of S-nitrosoglutathione. In addition, participates in the glucocorticoid metabolism by catalyzing the NADPH-dependent cortisol/corticosterone into 20beta-dihydrocortisol (20b-DHF) or 20beta-corticosterone (20b-DHB), which are weak agonists of NR3C1 and NR3C2 in adipose tissue. The chain is Carbonyl reductase [NADPH] 1 from Oryctolagus cuniculus (Rabbit).